The following is a 330-amino-acid chain: Malate dehydrogenase (330 aa).

Position 12–18 (glycine 12–glycine 18) interacts with NAD(+). Substrate-binding residues include arginine 93 and arginine 99. NAD(+) is bound by residues asparagine 106, glutamine 113, and valine 130–asparagine 132. The substrate site is built by asparagine 132 and arginine 163. Residue histidine 188 is the Proton acceptor of the active site.

It belongs to the LDH/MDH superfamily. MDH type 2 family.

The catalysed reaction is (S)-malate + NAD(+) = oxaloacetate + NADH + H(+). Catalyzes the reversible oxidation of malate to oxaloacetate. This is Malate dehydrogenase from Legionella pneumophila subsp. pneumophila (strain Philadelphia 1 / ATCC 33152 / DSM 7513).